We begin with the raw amino-acid sequence, 236 residues long: Small ribosomal subunit protein uS10m (236 aa).

A mitochondrion-targeting transit peptide spans 1–24; that stretch reads MMRQSIRPLRAFSSEVSWIARRTQ. Residues 29-49 are disordered; that stretch reads KPGDLVPNKPEPSKNEQEPRF. A compositionally biased stretch (basic and acidic residues) spans 39–49; sequence EPSKNEQEPRF.

Belongs to the universal ribosomal protein uS10 family. As to quaternary structure, part of the mitochondrial small ribosomal subunit.

The protein localises to the mitochondrion. Its function is as follows. Involved in mitochondrial genome encoded proteins translation. Involved in the binding of tRNA to the ribosomes. This is Small ribosomal subunit protein uS10m (RSM10) from Gibberella zeae (strain ATCC MYA-4620 / CBS 123657 / FGSC 9075 / NRRL 31084 / PH-1) (Wheat head blight fungus).